Reading from the N-terminus, the 550-residue chain is Kinase suppressor of Ras B (550 aa).

2 stretches are compositionally biased toward low complexity: residues 21-56 and 63-75; these read SFSS…SNPI and ATSS…STSS. The segment at 21–87 is disordered; the sequence is SFSSWRRSST…PPPASAPPRI (67 aa). The Phorbol-ester/DAG-type zinc-finger motif lies at 90 to 145; the sequence is YHKMVPSKSKFRQCDVCEHIFIFDFVRKQHLDDVYACNVCGIRVHKGCLDRVKNDC. The disordered stretch occupies residues 172–196; the sequence is TTASISKSLTTSPTCSTSTTMSPAG. Residues 177 to 193 show a composition bias toward low complexity; the sequence is SKSLTTSPTCSTSTTMS. Positions 248–528 constitute a Protein kinase domain; that stretch reads VDVMTKIGDG…FQQIVKRITV (281 aa). Residues 530–550 are disordered; it reads MPRKESNKQKRRSTAHENPLF.

This sequence belongs to the protein kinase superfamily. TKL Ser/Thr protein kinase family. Interacts with ndk-1.

Its function is as follows. Probable inactive protein kinase which positively regulates Ras-mediated signaling probably acting at the level of let-60/ras or/and lin-45/raf. In the germline, regulates meiotic progression during oogenesis and mpk-1 (isoform b) phosphorylation. Plays a role in meiotic recombination events. Functions redundantly with ksr-1 in the Ras-mediated regulation of larval survival, the development of excretory canal, in determining vulval precursor cell fate during vulval induction and in mpk-1 phosphorylation in somatic cells. In Caenorhabditis elegans, this protein is Kinase suppressor of Ras B.